The following is a 208-amino-acid chain: UPF0323 lipoprotein HH_0014 (208 aa).

A signal peptide spans 1–26; it reads MKHIHKIKNYAMVGGLGVMAVFALNA. The N-palmitoyl cysteine moiety is linked to residue cysteine 27. Cysteine 27 carries S-diacylglycerol cysteine lipidation. Residues 148–208 are disordered; sequence ANSQRNYKSP…TNRNTGSMGS (61 aa). Low complexity-rich tracts occupy residues 169–185 and 193–208; these read SAKTGASGASKTSSGKS and SSQSTSTNRNTGSMGS.

The protein belongs to the UPF0323 family.

It is found in the cell membrane. The polypeptide is UPF0323 lipoprotein HH_0014 (Helicobacter hepaticus (strain ATCC 51449 / 3B1)).